Here is a 154-residue protein sequence, read N- to C-terminus: Myoglobin (154 aa).

The 147-residue stretch at 2–148 folds into the Globin domain; that stretch reads VLSDAEWQLV…FRKDIAAKYK (147 aa). Serine 4 carries the phosphoserine modification. Residue histidine 65 coordinates nitrite. Histidine 65 is an O2 binding site. Threonine 68 is subject to Phosphothreonine. Histidine 94 is a binding site for heme b.

The protein belongs to the globin family. Monomeric.

It localises to the cytoplasm. The protein resides in the sarcoplasm. It catalyses the reaction Fe(III)-heme b-[protein] + nitric oxide + H2O = Fe(II)-heme b-[protein] + nitrite + 2 H(+). The enzyme catalyses H2O2 + AH2 = A + 2 H2O. Monomeric heme protein which primary function is to store oxygen and facilitate its diffusion within muscle tissues. Reversibly binds oxygen through a pentacoordinated heme iron and enables its timely and efficient release as needed during periods of heightened demand. Depending on the oxidative conditions of tissues and cells, and in addition to its ability to bind oxygen, it also has a nitrite reductase activity whereby it regulates the production of bioactive nitric oxide. Under stress conditions, like hypoxia and anoxia, it also protects cells against reactive oxygen species thanks to its pseudoperoxidase activity. This is Myoglobin (MB) from Megaptera novaeangliae (Humpback whale).